We begin with the raw amino-acid sequence, 415 residues long: Peptide chain release factor subunit 1-2 (415 aa).

The protein belongs to the eukaryotic release factor 1 family. Heterodimer of two subunits, one of which binds GTP.

The protein resides in the cytoplasm. Directs the termination of nascent peptide synthesis (translation) in response to the termination codons UAA, UAG and UGA. This Methanosarcina acetivorans (strain ATCC 35395 / DSM 2834 / JCM 12185 / C2A) protein is Peptide chain release factor subunit 1-2.